A 92-amino-acid polypeptide reads, in one-letter code: Acyl carrier protein (92 aa).

A Carrier domain is found at 1–84; it reads MPSTADERQL…QIAAHLAEAV (84 aa). S44 is subject to O-(pantetheine 4'-phosphoryl)serine.

This sequence belongs to the acyl carrier protein (ACP) family. Post-translationally, 4'-phosphopantetheine is transferred from CoA to a specific serine of apo-ACP by AcpS. This modification is essential for activity because fatty acids are bound in thioester linkage to the sulfhydryl of the prosthetic group.

It localises to the cytoplasm. Its pathway is lipid metabolism; fatty acid biosynthesis. Functionally, carrier of the growing fatty acid chain in fatty acid biosynthesis. In Streptomyces coelicolor (strain ATCC BAA-471 / A3(2) / M145), this protein is Acyl carrier protein.